We begin with the raw amino-acid sequence, 365 residues long: Putative glutamate--cysteine ligase 2-2 (365 aa).

Belongs to the glutamate--cysteine ligase type 2 family. YbdK subfamily.

The enzyme catalyses L-cysteine + L-glutamate + ATP = gamma-L-glutamyl-L-cysteine + ADP + phosphate + H(+). Its function is as follows. ATP-dependent carboxylate-amine ligase which exhibits weak glutamate--cysteine ligase activity. The sequence is that of Putative glutamate--cysteine ligase 2-2 from Mycolicibacterium vanbaalenii (strain DSM 7251 / JCM 13017 / BCRC 16820 / KCTC 9966 / NRRL B-24157 / PYR-1) (Mycobacterium vanbaalenii).